Consider the following 336-residue polypeptide: HTH-type transcriptional repressor PurR (336 aa).

The HTH lacI-type domain occupies 2 to 56; sequence ATIKDVAKMAGVSTTTVSHVINKTRFVAKDTEEAVLSAIKQLNYSPSAVARSLKV. Positions 4-23 form a DNA-binding region, H-T-H motif; sequence IKDVAKMAGVSTTTVSHVIN. The DNA-binding element occupies 48-56; the sequence is SAVARSLKV. Hypoxanthine is bound by residues Tyr73, Lys188, Thr190, Phe219, and Asp273.

In terms of assembly, homodimer.

It participates in purine metabolism; purine nucleotide biosynthesis [regulation]. Is the main repressor of the genes involved in the de novo synthesis of purine nucleotides, regulating purB, purC, purEK, purF, purHD, purL, purMN and guaBA expression. PurR is allosterically activated to bind its cognate DNA by binding the purine corepressors, hypoxanthine or guanine, thereby effecting transcription repression. In Haemophilus influenzae (strain ATCC 51907 / DSM 11121 / KW20 / Rd), this protein is HTH-type transcriptional repressor PurR.